The following is a 311-amino-acid chain: Coproporphyrin III ferrochelatase 1 (311 aa).

Residues Tyr-12, Arg-29, 45–46 (RY), Ser-53, and Tyr-124 contribute to the Fe-coproporphyrin III site. Residues His-182 and Glu-263 each contribute to the Fe(2+) site.

The protein belongs to the ferrochelatase family.

Its subcellular location is the cytoplasm. It catalyses the reaction Fe-coproporphyrin III + 2 H(+) = coproporphyrin III + Fe(2+). Its pathway is porphyrin-containing compound metabolism; protoheme biosynthesis. Functionally, involved in coproporphyrin-dependent heme b biosynthesis. Catalyzes the insertion of ferrous iron into coproporphyrin III to form Fe-coproporphyrin III. This is Coproporphyrin III ferrochelatase 1 from Bacillus anthracis.